Consider the following 106-residue polypeptide: Protein translocase subunit SecE (106 aa).

A run of 2 helical transmembrane segments spans residues 20–40 (LPIR…LAAI) and 75–95 (IVIG…SIIV).

The protein belongs to the SecE/SEC61-gamma family. As to quaternary structure, component of the Sec protein translocase complex. Heterotrimer consisting of SecY, SecE and SecG subunits. The heterotrimers can form oligomers, although 1 heterotrimer is thought to be able to translocate proteins. Interacts with the ribosome. Interacts with SecDF, and other proteins may be involved. Interacts with SecA.

It localises to the cell inner membrane. Essential subunit of the Sec protein translocation channel SecYEG. Clamps together the 2 halves of SecY. May contact the channel plug during translocation. The protein is Protein translocase subunit SecE of Haemophilus influenzae (strain ATCC 51907 / DSM 11121 / KW20 / Rd).